The primary structure comprises 405 residues: S-adenosylmethionine synthase (405 aa).

141-146 (GQGSVD) contributes to the ATP binding site.

The protein belongs to the AdoMet synthase 2 family. Mg(2+) is required as a cofactor.

It carries out the reaction L-methionine + ATP + H2O = S-adenosyl-L-methionine + phosphate + diphosphate. It functions in the pathway amino-acid biosynthesis; S-adenosyl-L-methionine biosynthesis; S-adenosyl-L-methionine from L-methionine: step 1/1. In terms of biological role, catalyzes the formation of S-adenosylmethionine from methionine and ATP. This chain is S-adenosylmethionine synthase, found in Methanococcus maripaludis (Methanococcus deltae).